The sequence spans 210 residues: Nta operon transcriptional regulator (210 aa).

An HTH gntR-type domain is found at 1–55 (MAVSYHFRPGERINEVELAAQLKVSRTPLREALNRLTTEGFLTTTANKGFFARVL). Residues 15–34 (EVELAAQLKVSRTPLREALN) constitute a DNA-binding region (H-T-H motif).

Probable regulator for the expression of the NTA monooxygenase subunits. The protein is Nta operon transcriptional regulator (ntaR) of Aminobacter aminovorans (Chelatobacter heintzii).